Consider the following 348-residue polypeptide: 4-hydroxyphenylpyruvate dioxygenase (348 aa).

VOC domains lie at 11–141 (GFAF…ITSP) and 151–303 (AIDH…IFTE). The Fe cation site is built by His154, His232, and Glu312.

It belongs to the 4HPPD family. The cofactor is Fe cation.

The catalysed reaction is 3-(4-hydroxyphenyl)pyruvate + O2 = homogentisate + CO2. In terms of biological role, catalyzes the transformation of p-hydroxyphenylpyruvate into HGA. Has hemolytic and brown pigment production activity. The chain is 4-hydroxyphenylpyruvate dioxygenase (lly) from Legionella pneumophila subsp. pneumophila (strain Philadelphia 1 / ATCC 33152 / DSM 7513).